A 256-amino-acid polypeptide reads, in one-letter code: 6-phosphogluconolactonase (256 aa).

The protein belongs to the glucosamine/galactosamine-6-phosphate isomerase family. 6-phosphogluconolactonase subfamily.

The enzyme catalyses 6-phospho-D-glucono-1,5-lactone + H2O = 6-phospho-D-gluconate + H(+). It participates in carbohydrate degradation; pentose phosphate pathway; D-ribulose 5-phosphate from D-glucose 6-phosphate (oxidative stage): step 2/3. Its function is as follows. Hydrolysis of 6-phosphogluconolactone to 6-phosphogluconate. The polypeptide is 6-phosphogluconolactonase (pgl) (Chlamydia trachomatis serovar D (strain ATCC VR-885 / DSM 19411 / UW-3/Cx)).